Reading from the N-terminus, the 397-residue chain is CCA-adding enzyme (397 aa).

ATP-binding residues include Gly-26 and Arg-29. The CTP site is built by Gly-26 and Arg-29. Residues Asp-39 and Asp-41 each contribute to the Mg(2+) site. ATP-binding residues include Arg-110, Asp-153, Arg-156, Arg-159, and Arg-162. CTP-binding residues include Arg-110, Asp-153, Arg-156, Arg-159, and Arg-162.

The protein belongs to the tRNA nucleotidyltransferase/poly(A) polymerase family. Bacterial CCA-adding enzyme type 3 subfamily. As to quaternary structure, homodimer. It depends on Mg(2+) as a cofactor.

The enzyme catalyses a tRNA precursor + 2 CTP + ATP = a tRNA with a 3' CCA end + 3 diphosphate. The catalysed reaction is a tRNA with a 3' CCA end + 2 CTP + ATP = a tRNA with a 3' CCACCA end + 3 diphosphate. In terms of biological role, catalyzes the addition and repair of the essential 3'-terminal CCA sequence in tRNAs without using a nucleic acid template. Adds these three nucleotides in the order of C, C, and A to the tRNA nucleotide-73, using CTP and ATP as substrates and producing inorganic pyrophosphate. tRNA 3'-terminal CCA addition is required both for tRNA processing and repair. Also involved in tRNA surveillance by mediating tandem CCA addition to generate a CCACCA at the 3' terminus of unstable tRNAs. While stable tRNAs receive only 3'-terminal CCA, unstable tRNAs are marked with CCACCA and rapidly degraded. This Bacillus cereus (strain ZK / E33L) protein is CCA-adding enzyme.